Consider the following 221-residue polypeptide: Small ribosomal subunit protein uS2c (221 aa).

It belongs to the universal ribosomal protein uS2 family.

The protein localises to the plastid. The protein resides in the chloroplast. The polypeptide is Small ribosomal subunit protein uS2c (rps2) (Cyanidioschyzon merolae (strain NIES-3377 / 10D) (Unicellular red alga)).